The chain runs to 457 residues: Allantoinase (457 aa).

Zn(2+) is bound by residues H58, H60, K145, H181, H237, and D310. N6-carboxylysine is present on K145.

Belongs to the metallo-dependent hydrolases superfamily. Allantoinase family. In terms of assembly, homotetramer. It depends on Zn(2+) as a cofactor. Carboxylation allows a single lysine to coordinate two zinc ions.

The enzyme catalyses (S)-allantoin + H2O = allantoate + H(+). It participates in nitrogen metabolism; (S)-allantoin degradation; allantoate from (S)-allantoin: step 1/1. In terms of biological role, catalyzes the conversion of allantoin (5-ureidohydantoin) to allantoic acid by hydrolytic cleavage of the five-member hydantoin ring. This is Allantoinase from Solibacter usitatus (strain Ellin6076).